Here is a 399-residue protein sequence, read N- to C-terminus: MTQSVCILGVTGSIGQSTLKILGQHPDKYSVFAVSAHSRISELVEICKQFRPKVVVVPEQKIAELKTLFAQQNISAIDVLAGQEGLVDIASHTDVDIVMAAIVGAAGLLPTLAAVKAGKRVLLANKEALVMSGEIMMQAARDHQALLLPVDSEHNAIFQSLPHNYLQADRTGQPQLGVSKILLTASGGPFLNHSLEQLVHVTPQKACKHPNWSMGQKISVDSATLMNKGLELIEACHLFSISEHFVTVVVHPQSIIHSMVQYVDGSTLAQMGNPDMCTPIAHALAWPERLQTNVPALDLFEYSQLNFQAPDTQKFPALNLARQAMRAGGLAPTILNAANEIAVEAFLMERIGFTSIPQVVEHTLEKLENTAAESIECILDKDKVARSVAQQYIKYWRLK.

NADPH-binding residues include Thr-11, Gly-12, Ser-13, Ile-14, and Asn-125. Lys-126 serves as a coordination point for 1-deoxy-D-xylulose 5-phosphate. Glu-127 contacts NADPH. Residue Asp-151 coordinates Mn(2+). Residues Ser-152, Glu-153, Ser-186, and His-209 each coordinate 1-deoxy-D-xylulose 5-phosphate. Glu-153 is a Mn(2+) binding site. Gly-215 provides a ligand contact to NADPH. 4 residues coordinate 1-deoxy-D-xylulose 5-phosphate: Ser-222, Asn-227, Lys-228, and Glu-231. Glu-231 contacts Mn(2+).

It belongs to the DXR family. Requires Mg(2+) as cofactor. The cofactor is Mn(2+).

The catalysed reaction is 2-C-methyl-D-erythritol 4-phosphate + NADP(+) = 1-deoxy-D-xylulose 5-phosphate + NADPH + H(+). Its pathway is isoprenoid biosynthesis; isopentenyl diphosphate biosynthesis via DXP pathway; isopentenyl diphosphate from 1-deoxy-D-xylulose 5-phosphate: step 1/6. Functionally, catalyzes the NADPH-dependent rearrangement and reduction of 1-deoxy-D-xylulose-5-phosphate (DXP) to 2-C-methyl-D-erythritol 4-phosphate (MEP). In Acinetobacter baumannii (strain SDF), this protein is 1-deoxy-D-xylulose 5-phosphate reductoisomerase.